Reading from the N-terminus, the 157-residue chain is MAEKNERPIKVVAENRKARFNYAIEDTVEAGIALTGTEVKSVRNGKTTIAESYADSRGGEIWLINANIPEYLQANRFNHEPKRPRKLLLHRKQINKLMGAVERQGMTLIPLKLYFNEKGRAKLLLALAKGKQLHDKRETEKKRDWSKEKGRLMRAKG.

A compositionally biased stretch (basic and acidic residues) spans H134 to R151. The disordered stretch occupies residues H134 to G157.

The protein belongs to the SmpB family.

Its subcellular location is the cytoplasm. Required for rescue of stalled ribosomes mediated by trans-translation. Binds to transfer-messenger RNA (tmRNA), required for stable association of tmRNA with ribosomes. tmRNA and SmpB together mimic tRNA shape, replacing the anticodon stem-loop with SmpB. tmRNA is encoded by the ssrA gene; the 2 termini fold to resemble tRNA(Ala) and it encodes a 'tag peptide', a short internal open reading frame. During trans-translation Ala-aminoacylated tmRNA acts like a tRNA, entering the A-site of stalled ribosomes, displacing the stalled mRNA. The ribosome then switches to translate the ORF on the tmRNA; the nascent peptide is terminated with the 'tag peptide' encoded by the tmRNA and targeted for degradation. The ribosome is freed to recommence translation, which seems to be the essential function of trans-translation. The sequence is that of SsrA-binding protein from Rhodopseudomonas palustris (strain BisA53).